Reading from the N-terminus, the 702-residue chain is Translation factor GUF1 homolog, chloroplastic (702 aa).

A compositionally biased stretch (low complexity) spans 1-30 (MASAAPASRGAARASTAARDAPFAAAARGP). The tract at residues 1-41 (MASAAPASRGAARASTAARDAPFAAAARGPGRFRRDGNGRN) is disordered. The 197-residue stretch at 87–283 (SQIRNFSIIA…NIVKMIPPPP (197 aa)) folds into the tr-type G domain. Residues 96–103 (AHIDHGKS), 162–166 (DTPGH), and 216–219 (NKID) contribute to the GTP site.

It belongs to the TRAFAC class translation factor GTPase superfamily. Classic translation factor GTPase family. LepA subfamily.

It localises to the plastid. The protein localises to the chloroplast. The catalysed reaction is GTP + H2O = GDP + phosphate + H(+). In terms of biological role, promotes chloroplast protein synthesis. May act as a fidelity factor of the translation reaction, by catalyzing a one-codon backward translocation of tRNAs on improperly translocated ribosomes. The polypeptide is Translation factor GUF1 homolog, chloroplastic (Micromonas pusilla (strain CCMP1545) (Picoplanktonic green alga)).